A 513-amino-acid polypeptide reads, in one-letter code: Na(+)/H(+) antiporter NhaB (513 aa).

12 consecutive transmembrane segments (helical) span residues L23 to A43, I52 to I72, L97 to F117, L120 to F140, F144 to I164, L202 to P222, F238 to L258, A303 to I323, T348 to I368, L391 to I411, A447 to I467, and V475 to F495.

It belongs to the NhaB Na(+)/H(+) (TC 2.A.34) antiporter family.

The protein resides in the cell inner membrane. It carries out the reaction 2 Na(+)(in) + 3 H(+)(out) = 2 Na(+)(out) + 3 H(+)(in). Its function is as follows. Na(+)/H(+) antiporter that extrudes sodium in exchange for external protons. The sequence is that of Na(+)/H(+) antiporter NhaB from Escherichia coli O6:K15:H31 (strain 536 / UPEC).